A 299-amino-acid chain; its full sequence is Ribosomal RNA small subunit methyltransferase H 1 (299 aa).

Residues 31-33, Asp-50, Phe-76, Asp-97, and Gln-104 contribute to the S-adenosyl-L-methionine site; that span reads GGH.

This sequence belongs to the methyltransferase superfamily. RsmH family.

It localises to the cytoplasm. The enzyme catalyses cytidine(1402) in 16S rRNA + S-adenosyl-L-methionine = N(4)-methylcytidine(1402) in 16S rRNA + S-adenosyl-L-homocysteine + H(+). Functionally, specifically methylates the N4 position of cytidine in position 1402 (C1402) of 16S rRNA. The polypeptide is Ribosomal RNA small subunit methyltransferase H 1 (Acholeplasma laidlawii (strain PG-8A)).